The chain runs to 164 residues: Ribosomal RNA large subunit methyltransferase H (164 aa).

Position 109 (Gly-109) interacts with S-adenosyl-L-methionine.

It belongs to the RNA methyltransferase RlmH family. Homodimer.

It is found in the cytoplasm. The enzyme catalyses pseudouridine(1915) in 23S rRNA + S-adenosyl-L-methionine = N(3)-methylpseudouridine(1915) in 23S rRNA + S-adenosyl-L-homocysteine + H(+). Functionally, specifically methylates the pseudouridine at position 1915 (m3Psi1915) in 23S rRNA. In Methylobacterium radiotolerans (strain ATCC 27329 / DSM 1819 / JCM 2831 / NBRC 15690 / NCIMB 10815 / 0-1), this protein is Ribosomal RNA large subunit methyltransferase H.